A 3313-amino-acid polypeptide reads, in one-letter code: Cadherin EGF LAG seven-pass G-type receptor 3 (3313 aa).

Residues 1 to 31 form the signal peptide; that stretch reads MARRPLWWGLPGPSTPLLLLLLFSLFPSSRE. Topologically, residues 32–2538 are extracellular; sequence EMGGGGDQGW…RLEGDLELLA (2507 aa). Disordered stretches follow at residues 148–187 and 205–269; these read LPLD…RNGR and EPGH…RMRS. The segment covering 258-268 has biased composition (basic and acidic residues); sequence HESRTAPERMR. Cadherin domains lie at 317-424, 425-536, 537-642, 643-747, 748-849, 850-952, 953-1058, 1059-1160, and 1161-1257; these read PQYN…APVF, EQAQ…APQF, SEKR…SPIF, VSTP…RPEF, TMKE…RPVF, QSAH…APQF, VASH…APVF, PAEE…SPVL, and NNFQ…VVII. Asn623 is a glycosylation site (N-linked (GlcNAc...) asparagine). Asn838 carries N-linked (GlcNAc...) asparagine glycosylation. N-linked (GlcNAc...) asparagine glycosylation is found at Asn1173, Asn1213, Asn1308, and Asn1318. Positions 1366–1424 constitute an EGF-like 1; calcium-binding domain; the sequence is DDNVCLREPCENYMKCVSVLRFDSSAPFLASASTLFRPIQPIAGLRCRCPPGFTGDFCE. 9 disulfides stabilise this stretch: Cys1370-Cys1381, Cys1375-Cys1412, Cys1414-Cys1423, Cys1430-Cys1441, Cys1435-Cys1450, Cys1452-Cys1461, Cys1470-Cys1481, Cys1475-Cys1491, and Cys1493-Cys1504. In terms of domain architecture, EGF-like 2; calcium-binding spans 1426–1462; it reads ELDLCYSNPCRNGGACARREGGYTCVCRPRFTGEDCE. Positions 1466–1505 constitute an EGF-like 3; calcium-binding domain; that stretch reads EAGRCVPGVCRNGGTCTNAPNGGFRCQCPAGGAFEGPRCE. Residues 1506–1710 form the Laminin G-like 1 domain; that stretch reads VAARSFPPSS…VANNGTTAGC (205 aa). Asn1640 and Asn1704 each carry an N-linked (GlcNAc...) asparagine glycan. 4 disulfides stabilise this stretch: Cys1684-Cys1710, Cys1717-Cys1728, Cys1722-Cys1737, and Cys1739-Cys1748. The EGF-like 4; calcium-binding domain occupies 1713–1749; it reads KSHFCASGPCKNGGLCSERWGGFSCDCPVGFGGKDCR. One can recognise a Laminin G-like 2 domain in the interval 1753-1935; it reads AHPYHFQGNG…SHRINVEPGC (183 aa). Asn1761 carries N-linked (GlcNAc...) asparagine glycosylation. 9 disulfide bridges follow: Cys1906–Cys1935, Cys1941–Cys1952, Cys1946–Cys1961, Cys1963–Cys1972, Cys1976–Cys1987, Cys1981–Cys1999, Cys2001–Cys2010, Cys2018–Cys2031, and Cys2033–Cys2043. Residues 1937–1972 enclose the EGF-like 5; calcium-binding domain; the sequence is VTNPCASGPCPPHANCKDLWQTFSCTCWPGYYGPGC. Asp1954 carries the (3R)-3-hydroxyaspartate modification. One can recognise an EGF-like 6; calcium-binding domain in the interval 1973–2011; it reads VDACLLNPCQNQGSCRHLQGGPHGYTCDCASGYFGQHCE. The EGF-like 7; calcium-binding domain occupies 2012 to 2044; the sequence is HRMDQQCPRGWWGSPTCGPCNCDVHKGFDPNCN. Asn2044 is a glycosylation site (N-linked (GlcNAc...) asparagine). One can recognise an EGF-like 8; calcium-binding domain in the interval 2046–2081; sequence TSGQCHCKEFHYRPRGSDSCLPCDCYPVGSTSRSCA. 5 disulfides stabilise this stretch: Cys2050–Cys2065, Cys2052–Cys2068, Cys2070–Cys2080, Cys2089–Cys2098, and Cys2101–Cys2113. Residues 2068 to 2115 enclose the Laminin EGF-like domain; that stretch reads CDCYPVGSTSRSCAPHSGQCPCRPGALGRQCNSCDSPFAEVTASGCRV. Tyr2117 bears the Phosphotyrosine mark. N-linked (GlcNAc...) asparagine glycosylation is found at Asn2173, Asn2192, Asn2382, Asn2472, and Asn2504. The segment at 2356–2395 is disordered; the sequence is HTHVLLPSQSPQPSPSEVLPTSSNAENATASGVVSPPAPL. Residues 2364 to 2528 enclose the GAIN-B domain; it reads QSPQPSPSEV…GVLMDASPRE (165 aa). Polar residues predominate over residues 2374–2387; sequence LPTSSNAENATASG. 2 cysteine pairs are disulfide-bonded: Cys2478/Cys2510 and Cys2498/Cys2512. Residues 2478–2528 form a GPS region; the sequence is CVQWDPPGPADQHGMWTARDCELVHRNGSHARCRCSRTGTFGVLMDASPRE. Residues 2539-2559 traverse the membrane as a helical segment; that stretch reads VFTHVVVAASVTALVLTAAVL. The Cytoplasmic portion of the chain corresponds to 2560–2570; the sequence is LSLRSLKSNVR. Residues 2571–2591 traverse the membrane as a helical segment; that stretch reads GIHANVAAALGVAELLFLLGI. Residues 2592–2599 lie on the Extracellular side of the membrane; that stretch reads HRTHNQLL. A helical transmembrane segment spans residues 2600–2620; it reads CTVVAILLHYFFLSTFAWLLV. Residues 2621–2641 lie on the Cytoplasmic side of the membrane; that stretch reads QGLHLYRMQVEPRNVDRGAMR. The helical transmembrane segment at 2642–2662 threads the bilayer; it reads FYHALGWGVPAVLLGLAVGLD. Topologically, residues 2663–2679 are extracellular; it reads PEGYGNPDFCWISIHEP. A helical transmembrane segment spans residues 2680–2700; that stretch reads LIWSFAGPIVLVIVMNGIMFL. The Cytoplasmic portion of the chain corresponds to 2701–2724; sequence LAARTSCSTGQREAKKTSVLRTLR. A helical membrane pass occupies residues 2725–2745; it reads SSFLLLLLVSASWLFGLLAVN. Topologically, residues 2746-2752 are extracellular; it reads HSVLAFH. A helical transmembrane segment spans residues 2753-2773; sequence YLHAGLCGLQGLAVLLLFCVL. At 2774-3313 the chain is on the cytoplasmic side; it reads NADARAAWTP…SEVPRSEGHS (540 aa). 2 disordered regions span residues 2887 to 2927 and 2977 to 3004; these read AGAD…RPLR and SNKD…RAQR. Residues 2889–2899 show a composition bias toward acidic residues; it reads ADSDSDSDLSL. Positions 2918 to 2927 are enriched in basic residues; it reads TRGRFQRPLR. At Tyr3050 the chain carries Phosphotyrosine. 2 disordered regions span residues 3091-3242 and 3255-3313; these read APVL…PSTE and NSSA…EGHS. Ser3098 is subject to Phosphoserine. Residues 3102–3119 show a composition bias toward basic and acidic residues; it reads SQERLDTAPARLEPRDRG. Low complexity-rich tracts occupy residues 3178-3197 and 3255-3289; these read QRPL…SLSR and NSSA…PSTP. Residues 3290-3301 are compositionally biased toward polar residues; the sequence is RSATSHSISELS.

It belongs to the G-protein coupled receptor 2 family. LN-TM7 subfamily. In terms of processing, the iron and 2-oxoglutarate dependent 3-hydroxylation of aspartate and asparagine is (R) stereospecific within EGF domains. In terms of tissue distribution, expressed in the brain. Expressed in cerebellum, olfactory bulb, cerebral cortex, hippocampus and brain stem.

The protein localises to the cell membrane. In terms of biological role, receptor that may have an important role in cell/cell signaling during nervous system formation. The chain is Cadherin EGF LAG seven-pass G-type receptor 3 (Celsr3) from Rattus norvegicus (Rat).